Consider the following 211-residue polypeptide: ATP phosphoribosyltransferase (211 aa).

It belongs to the ATP phosphoribosyltransferase family. Short subfamily. Heteromultimer composed of HisG and HisZ subunits.

The protein localises to the cytoplasm. The enzyme catalyses 1-(5-phospho-beta-D-ribosyl)-ATP + diphosphate = 5-phospho-alpha-D-ribose 1-diphosphate + ATP. It functions in the pathway amino-acid biosynthesis; L-histidine biosynthesis; L-histidine from 5-phospho-alpha-D-ribose 1-diphosphate: step 1/9. Functionally, catalyzes the condensation of ATP and 5-phosphoribose 1-diphosphate to form N'-(5'-phosphoribosyl)-ATP (PR-ATP). Has a crucial role in the pathway because the rate of histidine biosynthesis seems to be controlled primarily by regulation of HisG enzymatic activity. The sequence is that of ATP phosphoribosyltransferase from Pseudomonas syringae pv. tomato (strain ATCC BAA-871 / DC3000).